Reading from the N-terminus, the 291-residue chain is 5'-3' exonuclease (291 aa).

The 94-residue stretch at 176–269 (APYQVVEYKG…DLTGLKPIQK (94 aa)) folds into the 5'-3' exonuclease domain.

Its function is as follows. 5'-3' exonuclease acting preferentially on double-stranded DNA. The protein is 5'-3' exonuclease (polA) of Mycoplasma genitalium (strain ATCC 33530 / DSM 19775 / NCTC 10195 / G37) (Mycoplasmoides genitalium).